Consider the following 508-residue polypeptide: ADP-ribosylarginine hydrolase CG3568 (508 aa).

ADP-D-ribose contacts are provided by Arg209, Gly349, Gly351, Gly353, Val354, Trp355, Trp390, Asp441, Asn448, Glu449, Gly459, and Asp460.

The catalysed reaction is N(omega)-(ADP-D-ribosyl)-L-arginyl-[protein] + H2O = ADP-D-ribose + L-arginyl-[protein]. It carries out the reaction N(omega)-(ADP-D-ribosyl)-L-arginine + H2O = ADP-D-ribose + L-arginine. Functionally, protein ADP-ribosyl hydrolase that specifically removes mono-ADP-ribosyl modifications from protein arginine residues. The chain is ADP-ribosylarginine hydrolase CG3568 from Drosophila melanogaster (Fruit fly).